The primary structure comprises 347 residues: F-box/LRR-repeat/kelch-repeat protein At2g27520 (347 aa).

One can recognise an F-box domain in the interval 1 to 50; sequence MVRLDLPWDLVDEILSRLPATSLGRLRFTCKRWNALFKDPEFITKQFHKA. LRR repeat units lie at residues 59–82, 152–177, 196–220, and 261–285; these read LSNF…EIAQ, CKLV…NVEK, KFNI…LYQD, and LSWS…ILRI. Residues 138-187 form a Kelch 1 repeat; that stretch reads KSYDSYKILRITYGCKLVEIFELKSNSWRVLSKVHPNVEKHYYGGVSFKG. A Kelch 2 repeat occupies 306–347; it reads MIYIVGKNGFKKLSYEKDRSNLWRLPFFFSYVPSLVGLYPPM.

In Arabidopsis thaliana (Mouse-ear cress), this protein is F-box/LRR-repeat/kelch-repeat protein At2g27520.